We begin with the raw amino-acid sequence, 418 residues long: Serine hydroxymethyltransferase (418 aa).

(6S)-5,6,7,8-tetrahydrofolate-binding positions include leucine 121 and 125–127 (GHL). Lysine 230 carries the N6-(pyridoxal phosphate)lysine modification. (6S)-5,6,7,8-tetrahydrofolate-binding positions include glutamate 246 and 355–357 (SPF).

Belongs to the SHMT family. Homodimer. Requires pyridoxal 5'-phosphate as cofactor.

Its subcellular location is the cytoplasm. It carries out the reaction (6R)-5,10-methylene-5,6,7,8-tetrahydrofolate + glycine + H2O = (6S)-5,6,7,8-tetrahydrofolate + L-serine. It participates in one-carbon metabolism; tetrahydrofolate interconversion. It functions in the pathway amino-acid biosynthesis; glycine biosynthesis; glycine from L-serine: step 1/1. In terms of biological role, catalyzes the reversible interconversion of serine and glycine with tetrahydrofolate (THF) serving as the one-carbon carrier. This reaction serves as the major source of one-carbon groups required for the biosynthesis of purines, thymidylate, methionine, and other important biomolecules. Also exhibits THF-independent aldolase activity toward beta-hydroxyamino acids, producing glycine and aldehydes, via a retro-aldol mechanism. The polypeptide is Serine hydroxymethyltransferase (Streptococcus pneumoniae serotype 2 (strain D39 / NCTC 7466)).